Reading from the N-terminus, the 496-residue chain is Probable cytosol aminopeptidase (496 aa).

Mn(2+) contacts are provided by Lys-267 and Asp-272. Lys-279 is an active-site residue. The Mn(2+) site is built by Asp-290, Asp-349, and Glu-351. Arg-353 is a catalytic residue.

This sequence belongs to the peptidase M17 family. The cofactor is Mn(2+).

Its subcellular location is the cytoplasm. It carries out the reaction Release of an N-terminal amino acid, Xaa-|-Yaa-, in which Xaa is preferably Leu, but may be other amino acids including Pro although not Arg or Lys, and Yaa may be Pro. Amino acid amides and methyl esters are also readily hydrolyzed, but rates on arylamides are exceedingly low.. The enzyme catalyses Release of an N-terminal amino acid, preferentially leucine, but not glutamic or aspartic acids.. Functionally, presumably involved in the processing and regular turnover of intracellular proteins. Catalyzes the removal of unsubstituted N-terminal amino acids from various peptides. The polypeptide is Probable cytosol aminopeptidase (Methylobacillus flagellatus (strain ATCC 51484 / DSM 6875 / VKM B-1610 / KT)).